Consider the following 329-residue polypeptide: Protein-arginine N-acetylglucosaminyltransferase NleB1 (329 aa).

The N-beta-linked (GlcNAc) arginine; by autocatalysis glycan is linked to Arg-13. 48–50 (QWF) is a UDP-N-acetyl-alpha-D-glucosamine binding site. Residue Arg-53 is glycosylated (N-beta-linked (GlcNAc) arginine; by autocatalysis). UDP-N-acetyl-alpha-D-glucosamine is bound at residue Tyr-72. The N-beta-linked (GlcNAc) arginine; by autocatalysis glycan is linked to Arg-159. UDP-N-acetyl-alpha-D-glucosamine is bound at residue 219 to 222 (YLDA). The short motif at 221–223 (DAD) is the DXD motif element. Residue Asp-223 coordinates Mn(2+). Catalysis depends on Glu-253, which acts as the Proton acceptor. Arg-293 carries an N-beta-linked (GlcNAc) arginine; by autocatalysis glycan. 2 residues coordinate Mn(2+): Asn-320 and Ser-322. UDP-N-acetyl-alpha-D-glucosamine is bound by residues Ser-322 and 327–329 (SSW).

Belongs to the glycosyltransferase NleB family. Requires Mn(2+) as cofactor. Auto-glycosylated: arginine GlcNAcylation is required for activity toward death domain-containing host target proteins.

It is found in the secreted. Its subcellular location is the host cytoplasm. The catalysed reaction is L-arginyl-[protein] + UDP-N-acetyl-alpha-D-glucosamine = N(omega)-(N-acetyl-beta-D-glucosaminyl)-L-arginyl-[protein] + UDP + H(+). In terms of biological role, protein-arginine N-acetylglucosaminyltransferase effector that disrupts TNF signaling in infected cells, including NF-kappa-B signaling, apoptosis and necroptosis. Acts by catalyzing the transfer of a single N-acetylglucosamine (GlcNAc) to a conserved arginine residue in the death domain of host proteins FADD, TRADD, FAS, TNFRSF1A/TNFR1, TNFRSF25/DR3 and RIPK1: arginine GlcNAcylation prevents homotypic/heterotypic death domain interactions and assembly of the oligomeric TNF-alpha receptor complex, thereby disrupting TNF signaling. Has preference for host FADD as substrate compared to other death domain-containing proteins. Also acts on host proteins without a death domain: catalyzes arginine GlcNAcylation of HIF1A, thereby regulating host glucose metabolism. Also displays intra-bacterial activity by mediating GlcNAcylation of glutathione synthetase GshB. Catalyzes auto-GlcNAcylation, which is required for activity toward death domain-containing host target proteins. Shows a higher enzymatic activity than NleB2. The polypeptide is Protein-arginine N-acetylglucosaminyltransferase NleB1 (Escherichia coli O127:H6 (strain E2348/69 / EPEC)).